Reading from the N-terminus, the 378-residue chain is Erythronate-4-phosphate dehydrogenase (378 aa).

2 residues coordinate substrate: S45 and T66. The NAD(+) site is built by D146 and T175. Residue R208 is part of the active site. Residue D232 participates in NAD(+) binding. E237 is a catalytic residue. Residue H254 is the Proton donor of the active site. Residue G257 participates in NAD(+) binding. A substrate-binding site is contributed by Y258.

It belongs to the D-isomer specific 2-hydroxyacid dehydrogenase family. PdxB subfamily. Homodimer.

Its subcellular location is the cytoplasm. It catalyses the reaction 4-phospho-D-erythronate + NAD(+) = (R)-3-hydroxy-2-oxo-4-phosphooxybutanoate + NADH + H(+). The protein operates within cofactor biosynthesis; pyridoxine 5'-phosphate biosynthesis; pyridoxine 5'-phosphate from D-erythrose 4-phosphate: step 2/5. Functionally, catalyzes the oxidation of erythronate-4-phosphate to 3-hydroxy-2-oxo-4-phosphonooxybutanoate. The polypeptide is Erythronate-4-phosphate dehydrogenase (Klebsiella pneumoniae (strain 342)).